A 932-amino-acid chain; its full sequence is AP-3 complex subunit delta (932 aa).

At Thr2 the chain carries N-acetylthreonine. 12 HEAT repeats span residues 157–194 (SLAR…QYPE), 196–231 (LRDN…KNPQ), 233–269 (FIQL…VEPK), 270–307 (LRAK…LEED), 310–346 (ETAM…KINT), 347–384 (DFIS…EDNL), 386–425 (AIVQ…ENYK), 427–466 (KMVN…DISD), 490–527 (VTIA…TLVE), 528–564 (NGND…NWCN), 570–601 (KRFE…ERSV), and 602–638 (EVLE…AYEL). 2 positions are modified to phosphoserine: Ser700 and Ser727. The disordered stretch occupies residues 720–868 (EREKERMSNP…EEGNLRKEDE (149 aa)). Basic and acidic residues-rich tracts occupy residues 738-747 (ERTKNSKDLL) and 755-766 (SDKKPETIRLNR). Position 767 is a phosphothreonine (Thr767). Over residues 767 to 779 (TDNSLNSLSLSTT) the composition is skewed to low complexity. Residues Ser770 and Ser773 each carry the phosphoserine modification. Positions 783–793 (RKKKKGKKKNR) are enriched in basic residues. The residue at position 798 (Ser798) is a Phosphoserine. Residues 806–832 (APKRKDAFQKPHDNHSTQNPLKKDKIN) are compositionally biased toward basic and acidic residues. A compositionally biased stretch (polar residues) spans 838–855 (QLENFDFSNFGQSSNAGR). The segment covering 857–868 (SQEEGNLRKEDE) has biased composition (basic and acidic residues). A coiled-coil region spans residues 858–878 (QEEGNLRKEDELELSRLEANL). Phosphoserine is present on Ser888. Over residues 897–915 (KKKKKGKKSKSKNKLKTKA) the composition is skewed to basic residues. The disordered stretch occupies residues 897 to 932 (KKKKKGKKSKSKNKLKTKAKNSPEPNEFLRDQSTDI). Residue Ser918 is modified to Phosphoserine. The segment covering 923–932 (EFLRDQSTDI) has biased composition (basic and acidic residues).

This sequence belongs to the adaptor complexes large subunit family. As to quaternary structure, adaptor protein complex 3 (AP-3) is a heterotetramer composed of 2 large adaptins (APL5 and APL6), a medium adaptin (APM3) and a small adaptin (APS3). Interacts with VPS41.

Its subcellular location is the golgi apparatus. It is found in the cytoplasmic vesicle. The protein localises to the clathrin-coated vesicle membrane. In terms of biological role, part of the AP-3 complex, an adaptor-related complex which is not clathrin-associated. The complex is associated with the Golgi region as well as more peripheral structures. It facilitates the budding of vesicles from the Golgi membrane and may be directly involved in trafficking to the vacuole. Required for the transport via the ALP pathway, which directs the transport of the cargo proteins PHO8 and VAM3 to the vacuole. In Saccharomyces cerevisiae (strain ATCC 204508 / S288c) (Baker's yeast), this protein is AP-3 complex subunit delta (APL5).